The chain runs to 321 residues: Malate dehydrogenase (321 aa).

NAD(+) contacts are provided by residues 10–15 (GSGMIG) and D34. Substrate-binding residues include R83 and R89. Residues N96 and 119-121 (ITN) contribute to the NAD(+) site. Positions 121 and 152 each coordinate substrate. H176 serves as the catalytic Proton acceptor.

The protein belongs to the LDH/MDH superfamily. MDH type 3 family.

It carries out the reaction (S)-malate + NAD(+) = oxaloacetate + NADH + H(+). Catalyzes the reversible oxidation of malate to oxaloacetate. This is Malate dehydrogenase from Sinorhizobium fredii (strain NBRC 101917 / NGR234).